A 908-amino-acid polypeptide reads, in one-letter code: DNA (cytosine-5)-methyltransferase 3A (908 aa).

Residues 1-13 show a composition bias toward polar residues; the sequence is MPSSGPGDTSISS. 2 disordered regions span residues 1–183 and 226–281; these read MPSS…PMPR and SQAS…PEYE. The span at 14–37 shows a compositional bias: basic and acidic residues; sequence LEREDDRKEGEEQEENRGKEERQE. The span at 44-54 shows a compositional bias: basic residues; that stretch reads KVGRPGRKRKH. Over residues 69 to 80 the composition is skewed to polar residues; sequence TTKSQPTAQDSG. Residue Ser102 is modified to Phosphoserine. The span at 110 to 124 shows a compositional bias: low complexity; it reads GAPAEGEGTETPPEA. Thr120 is modified (phosphothreonine). Residue Lys158 forms a Glycyl lysine isopeptide (Lys-Gly) (interchain with G-Cter in SUMO2) linkage. An Omega-N-methylarginine modification is found at Arg167. The tract at residues 195–399 is interaction with DNMT1 and DNMT3B; that stretch reads SKRKRDEWLA…DTGKAVEVQN (205 aa). Residues Ser239 and Ser251 each carry the phosphoserine modification. A compositionally biased stretch (polar residues) spans 242-256; sequence AVQQPTDPASPTVAT. Thr257 carries the phosphothreonine modification. The PWWP domain occupies 257 to 315; that stretch reads TPEPVGADAGDKNATKAADDEPEYEDGRGFGIGELVWGKLRGFSWWPGRIVSWWMTGRS. Basic and acidic residues predominate over residues 265-275; sequence AGDKNATKAAD. Phosphoserine is present on residues Ser386 and Ser389. The disordered stretch occupies residues 443 to 462; the sequence is AYAPPPPAKKPRKSTTEKPK. One can recognise an ADD domain in the interval 478-610; that stretch reads EVRQKCRNIE…LQMFFANNHD (133 aa). The GATA-type; atypical zinc finger occupies 489–519; sequence ICISCGSLNVTLEHPLFIGGMCQNCKNCFLE. Residues 490-582 form an interaction with the PRC2/EED-EZH2 complex region; sequence CISCGSLNVT…KEDPWNCYMC (93 aa). The PHD-type; atypical zinc finger occupies 530-586; that stretch reads QSYCTICCGGREVLMCGNNNCCRCFCVECVDLLVGPGAAQAAIKEDPWNCYMCGHKG. The region spanning 630–908 is the SAM-dependent MTase C5-type domain; it reads IRVLSLFDGI…APLKEYFACV (279 aa). Residues 637–641, Glu660, and 682–684 contribute to the S-adenosyl-L-methionine site; these read DGIAT and DVR. Residue Cys706 is part of the active site. Cys706 carries the S-methylcysteine; by autocatalysis modification. 887-889 contributes to the S-adenosyl-L-methionine binding site; that stretch reads RSW.

Belongs to the class I-like SAM-binding methyltransferase superfamily. C5-methyltransferase family. In terms of assembly, heterotetramer composed of 1 DNMT3A homodimer and 2 DNMT3L subunits (DNMT3L-DNMT3A-DNMT3A-DNMT3L). Interacts with DNMT1 and DNMT3B. Interacts with MPHOSPH8. Interacts with histone H3 that is not methylated at 'Lys-4' (H3K4). Binds the ZBTB18 transcriptional repressor. Interacts with SETDB1. Associates with HDAC1 through its ADD domain. Interacts with UHRF1. Interacts with the PRC2/EED-EZH2 complex. Interacts with UBC9, PIAS1 and PIAS2. Interacts with SPOCD1. Interacts with ZNF263; recruited to the SIX3 promoter along with other proteins involved in chromatin modification and transcriptional corepression where it contributes to transcriptional repression. Post-translationally, sumoylated; sumoylation disrupts the ability to interact with histone deacetylases (HDAC1 and HDAC2) and repress transcription. In terms of processing, auto-methylated at Cys-706: auto-methylation takes place in absence of DNA substrate and inactivates the DNA methyltransferase activity. Inactivation by auto-methylation may be used to inactivate unused DNA methyltransferases in the cell.

It is found in the nucleus. It localises to the chromosome. Its subcellular location is the cytoplasm. It carries out the reaction a 2'-deoxycytidine in DNA + S-adenosyl-L-methionine = a 5-methyl-2'-deoxycytidine in DNA + S-adenosyl-L-homocysteine + H(+). The enzyme catalyses L-cysteinyl-[protein] + S-adenosyl-L-methionine = S-methyl-L-cysteinyl-[protein] + S-adenosyl-L-homocysteine + H(+). Activated by binding to the regulatory factor DNMT3L. Auto-methylation at Cys-706 in absence of DNA inactivates the DNA methyltransferase activity. In terms of biological role, required for genome-wide de novo methylation and is essential for the establishment of DNA methylation patterns during development. DNA methylation is coordinated with methylation of histones. It modifies DNA in a non-processive manner and also methylates non-CpG sites. May preferentially methylate DNA linker between 2 nucleosomal cores and is inhibited by histone H1. Plays a role in paternal and maternal imprinting. Required for methylation of most imprinted loci in germ cells. Acts as a transcriptional corepressor for ZBTB18. Recruited to trimethylated 'Lys-36' of histone H3 (H3K36me3) sites. Can actively repress transcription through the recruitment of HDAC activity. Also has weak auto-methylation activity on Cys-706 in absence of DNA. The protein is DNA (cytosine-5)-methyltransferase 3A (Dnmt3a) of Rattus norvegicus (Rat).